The chain runs to 1181 residues: MDNNPKINECIPYNCLSNPEVEVLGGERIETGYTPIDISLSLTQFLLSEFVPGAGFVLGLIDLIWGFVGPSQWDAFLVQIEQLISQRIEEFARNQAISRLEGLSNLYQIYAEAFREWEADPTNPALREEMRIQFNDMNSALTTAIPLFTVQNYQVPLLSVYVQAVNLHLSVLRDVSVFGQRWGLDVATINSRYNDLTRLIGTYTDYAVRWYNTGLERVWGPDSRDWVRYNQFRRELTLTVLDIVSLFPNYDSRTYPIRTVSQLTREIYTNPVLENFDGSFRGSAQRIEQSIRSPHLMDILNSITIYTDAHGGYYYWSGHQIMASPVGFSGPEFTFPLYGTMGNAAPQQRIVAQLGQGVYRTLSSTFYRNPFIIGINNQRLSVLDGTEFAYGSSSNLPSAVYRKSGTVDSLDEIPPQDNNVPPRQGFSHRLSHVSMFRSGFSNSSVSIIRAPMFSWIHRSAEFNNIIPSSQITQIPLTKSTNLGSGTSVVKGPGFTGGDILRRTSPGQISTLRVNITAPLSQRYRVRIRYASTTNLQFHTSIDGRPINQGNFSATMSSGGNLQSGSFRTVGFTTPFNFSNGSSVFTLSAHVFNSGNEVYIDRIEFVPAEVTFEAEYDLERAQEAVNALFTSPNQIGLKTDVTDYHIDQVSNLVECLSDEFCLDEKRELSEKVKHAKRLSDERNLLQDPNFRGINRQPDRGWRGSTDITIQGGDDVFKENYVTLPGTFDECYPTYLYQKIDESKLKAYTRYELRGYIEDSQDLEIYLIRYNAKHETVNVPGTGSLWPLSFESSIGKCGEPNRCAPHLEWNPDLDCSCRDGEKCAHHSHHFSLDIDVGCIDLNEDLGVWVIFKIKTQDGHARLGNLEFLEEKPLVGEALARVKRAEKKWRDKREKLQLETNIVYKEAKESVDALFVNSQYDQLQADTNIAMIHTADKRVHRIQEAYLPELSVIPGVNAGIFEELEGRIFTAYSLYDARNVIKNGDFNNGLSCWNVKGHVDVEEQNNHRSVLVVPEWEAEVSQEVRVCPGRGYILRVTAYKEGYGEGCVTIHEIENNTDELKFSNCVEEEVYPNNTVTCNEYTANQEEYGGAYTSCNRGYDETYGSNYSVPADYASVYEEKAYTDGRRENPCESNRGYGDYTPLPAGYVTKQLEYFPETDKVWIEIGETEGTFIVDSVELFLMEE.

Belongs to the delta endotoxin family.

Functionally, promotes colloidosmotic lysis by binding to the midgut epithelial cells of many lepidopteran larvae. The sequence is that of Pesticidal crystal protein Cry1Ae (cry1Ae) from Bacillus thuringiensis subsp. alesti.